Consider the following 408-residue polypeptide: Broad specificity amino-acid racemase (408 aa).

The N-terminal stretch at 1–21 is a signal peptide; it reads MHKKTLLATLILGLLAGQAVA. Cys-70 and Cys-96 are disulfide-bonded. Lys-74 (proton acceptor) is an active-site residue. Lys-74 carries the N6-(pyridoxal phosphate)lysine modification. Arg-173 serves as a coordination point for substrate. Tyr-300 acts as the Proton acceptor in catalysis. Met-348 contacts substrate.

The protein belongs to the alanine racemase family. Bsr subfamily. In terms of assembly, homodimer. Requires pyridoxal 5'-phosphate as cofactor.

It is found in the periplasm. The enzyme catalyses an L-alpha-amino acid = a D-alpha-amino acid. It carries out the reaction L-lysine = D-lysine. It catalyses the reaction L-arginine = D-arginine. The catalysed reaction is L-alanine = D-alanine. The enzyme catalyses L-serine = D-serine. It carries out the reaction L-methionine = D-methionine. It catalyses the reaction L-leucine = D-leucine. The catalysed reaction is L-cysteine = D-cysteine. The enzyme catalyses L-glutamine = D-glutamine. It carries out the reaction L-asparagine = D-asparagine. It catalyses the reaction L-histidine = D-histidine. In terms of biological role, amino-acid racemase able to utilize a broad range of substrates. Reversibly racemizes ten of the 19 natural chiral amino acids known, including both non-beta-branched aliphatic amino acids (Ala, Leu, Met, Ser, Cys, Gln and Asn) and positively charged amino acids (His, Lys and Arg). Is not active on negatively charged (Glu and Asp) or aromatic (Tyr, Trp and Phe) amino acids and displays minimal activity towards beta-branched aliphatic (Ile, Val and Thr) substrates. Enables bacteria to produce and release extracellular non-canonical D-amino acids (NCDAAs) that regulate diverse cellular processes. The chain is Broad specificity amino-acid racemase from Aeromonas hydrophila subsp. hydrophila (strain ATCC 7966 / DSM 30187 / BCRC 13018 / CCUG 14551 / JCM 1027 / KCTC 2358 / NCIMB 9240 / NCTC 8049).